The chain runs to 125 residues: MIQIDFEKMGGLVPAIIQDYQTNEVLMVAFIDEKALKLTLETGKTWLFSRSRNKHWMKGEQSGNTQEVQEVYTDCDADALVIKVKQNGGAACHTGNRSCFYVRWEDGAWVEHSEPLFDPDEVYKK.

Aspartate 74 is a Mg(2+) binding site. A Zn(2+)-binding site is contributed by cysteine 75. Positions 76 and 78 each coordinate Mg(2+). 2 residues coordinate Zn(2+): cysteine 92 and cysteine 99.

This sequence belongs to the PRA-CH family. As to quaternary structure, homodimer. The cofactor is Mg(2+). Requires Zn(2+) as cofactor.

It is found in the cytoplasm. The enzyme catalyses 1-(5-phospho-beta-D-ribosyl)-5'-AMP + H2O = 1-(5-phospho-beta-D-ribosyl)-5-[(5-phospho-beta-D-ribosylamino)methylideneamino]imidazole-4-carboxamide. It participates in amino-acid biosynthesis; L-histidine biosynthesis; L-histidine from 5-phospho-alpha-D-ribose 1-diphosphate: step 3/9. In terms of biological role, catalyzes the hydrolysis of the adenine ring of phosphoribosyl-AMP. The sequence is that of Phosphoribosyl-AMP cyclohydrolase from Syntrophotalea carbinolica (strain DSM 2380 / NBRC 103641 / GraBd1) (Pelobacter carbinolicus).